We begin with the raw amino-acid sequence, 317 residues long: Apolipoprotein E (317 aa).

Positions 1–18 (MRVLWVALVVTLLAGCRT) are cleaved as a signal peptide. 8 consecutive repeat copies span residues 79 to 100 (ELIE…AQLG), 101 to 122 (PVTQ…ARVG), 123 to 144 (ADME…NMLG), 145 to 166 (QTTE…KRLV), 167 to 188 (RDTE…EGAE), 189 to 210 (RSVS…LRAA), 211 to 232 (TLST…QKLR), and 233 to 254 (GRLE…DELE). The tract at residues 79 to 254 (ELIEESMKEV…RLDEMRDELE (176 aa)) is 8 X 22 AA approximate tandem repeats. Met142 is subject to Methionine sulfoxide. Residues 157 to 167 (HLRNVRKRLVR) are LDL and other lipoprotein receptors binding. Residue 161–164 (VRKR) coordinates heparin. Residues 209–289 (AATLSTRAGQ…GWFEPLVEDM (81 aa)) are lipid-binding and lipoprotein association. Heparin is bound at residue 228-235 (GQKLRGRL). The segment at 265-317 (SQLRLQAEAFQARLKGWFEPLVEDMRRQWAGLVERMQSAVSISSSTSAPSDNQ) is homooligomerization. The segment at 277-289 (RLKGWFEPLVEDM) is specificity for association with VLDL.

It belongs to the apolipoprotein A1/A4/E family. Homotetramer. May interact with ABCA1; functionally associated with ABCA1 in the biogenesis of HDLs. May interact with APP/A4 amyloid-beta peptide; the interaction is extremely stable in vitro but its physiological significance is unclear. May interact with MAPT. May interact with MAP2. In the cerebrospinal fluid, interacts with secreted SORL1. Interacts with PMEL; this allows the loading of PMEL luminal fragment on ILVs to induce fibril nucleation. APOE exists as multiple glycosylated and sialylated glycoforms within cells and in plasma. The extent of glycosylation and sialylation are tissue and context specific. Post-translationally, glycated in plasma VLDL. In terms of processing, phosphorylated by FAM20C in the extracellular medium.

It localises to the secreted. The protein localises to the extracellular space. The protein resides in the extracellular matrix. Its subcellular location is the extracellular vesicle. It is found in the endosome. It localises to the multivesicular body. In terms of biological role, APOE is an apolipoprotein, a protein associating with lipid particles, that mainly functions in lipoprotein-mediated lipid transport between organs via the plasma and interstitial fluids. APOE is a core component of plasma lipoproteins and is involved in their production, conversion and clearance. Apolipoproteins are amphipathic molecules that interact both with lipids of the lipoprotein particle core and the aqueous environment of the plasma. As such, APOE associates with chylomicrons, chylomicron remnants, very low density lipoproteins (VLDL) and intermediate density lipoproteins (IDL) but shows a preferential binding to high-density lipoproteins (HDL). It also binds a wide range of cellular receptors including the LDL receptor/LDLR and the very low-density lipoprotein receptor/VLDLR that mediate the cellular uptake of the APOE-containing lipoprotein particles. Finally, APOE also has a heparin-binding activity and binds heparan-sulfate proteoglycans on the surface of cells, a property that supports the capture and the receptor-mediated uptake of APOE-containing lipoproteins by cells. The chain is Apolipoprotein E (APOE) from Sus scrofa (Pig).